Reading from the N-terminus, the 488-residue chain is Bile acid receptor (488 aa).

Lys133 participates in a covalent cross-link: Glycyl lysine isopeptide (Lys-Gly) (interchain with G-Cter in SUMO1). The nuclear receptor DNA-binding region spans 135 to 210; that stretch reads DELCVVCGDR…MGMLAECMYT (76 aa). Residues 138–158 form an NR C4-type zinc finger; that stretch reads CVVCGDRASGYHYNALTCEGC. A phosphoserine; by PKC/PRKCA mark is found at Ser146 and Ser165. Lys168 is modified (N6-acetyllysine; by EP300). An NR C4-type zinc finger spans residues 174–198; it reads CKNGGNCVMDMYMRRKCQECRLRKC. N6-methyllysine; by SETD7 is present on Lys221. At Lys228 the chain carries N6-acetyllysine; by EP300. Positions 264–488 constitute an NR LBD domain; sequence DQQTLLDYIM…PLLCEIWDVQ (225 aa). Lys291 is covalently cross-linked (Glycyl lysine isopeptide (Lys-Gly) (interchain with G-Cter in SUMO1)). 3 residues coordinate chenodeoxycholate: Arg347, Tyr377, and Tyr385. Thr458 is modified (phosphothreonine; by PKC/PRKCZ). His463 provides a ligand contact to chenodeoxycholate.

This sequence belongs to the nuclear hormone receptor family. NR1 subfamily. As to quaternary structure, heterodimer with RXRA; the heterodimerization enhances the binding affinity for LXXLL motifs from coactivators. Binds DNA predominantly as a heterodimer with RXRA. After activation by agonist binding interacts with coactivators. Interacts with PPARGC1A, SMARCA4 and EP300. Interacts with NCOA1, NCOA2, CARM1, SETD7, PRMT1, GPS2, SMARCA4 and MED1. Interacts with XRCC5 and XRCC6; decreasing NR1H4/FXR transactivation activity towards ABCB11/BSEP. Interacts with PAGR1 and NCOA6; indicative for an association with an MLL2/MLL3 complex (ASCOM). Interacts with NR5A2. Post-translationally, acetylated by EP300. Lys-228 as is the major acetylation site for EP300; the dynamicly regulated acetylation inhibits heterodimerization with RXRA and transactivation activity. Deacetylated by SIRT1. Elevated acetylation levels are found in metabolic disease states (mouse models of obesity and type II diabetes). Methylation may increase transactivation of target genes. In terms of processing, phosphorylation by PKC/PRKCA increases transactivation activity by promoting association with PPARGC1A. Post-translationally, sumoylated upon ligand binding. As to expression, expressed in liver and kidney. Expressed in pancreatic beta cells and macrophages. Expressed in the villus epithelium in adult ileum, with highest expression in the intervillus regions. Expression in colon is reduced by inflammation.

The protein localises to the nucleus. Its function is as follows. Ligand-activated transcription factor. Receptor for bile acids (BAs) such as chenodeoxycholic acid (CDCA), lithocholic acid, deoxycholic acid (DCA) and allocholic acid (ACA). Plays a essential role in BA homeostasis through the regulation of genes involved in BA synthesis, conjugation and enterohepatic circulation. Also regulates lipid and glucose homeostasis and is involved in innate immune response. The FXR-RXR heterodimer binds predominantly to farnesoid X receptor response elements (FXREs) containing two inverted repeats of the consensus sequence 5'-AGGTCA-3' in which the monomers are spaced by 1 nucleotide (IR-1) but also to tandem repeat DR1 sites with lower affinity, and can be activated by either FXR or RXR-specific ligands. It is proposed that monomeric nuclear receptors such as NR5A2/LRH-1 bound to coregulatory nuclear responsive element (NRE) halfsites located in close proximity to FXREs modulate transcriptional activity. In the liver activates transcription of the corepressor NR0B2 thereby indirectly inhibiting CYP7A1 and CYP8B1 (involved in BA synthesis) implicating at least in part histone demethylase KDM1A resulting in epigenomic repression, and SLC10A1/NTCP (involved in hepatic uptake of conjugated BAs). Activates transcription of the repressor MAFG (involved in regulation of BA synthesis). Activates transcription of SLC27A5/BACS and BAAT (involved in BA conjugation), ABCB11/BSEP (involved in bile salt export) by directly recruiting histone methyltransferase CARM1, and ABCC2/MRP2 (involved in secretion of conjugated BAs) and ABCB4 (involved in secretion of phosphatidylcholine in the small intestine). In ileal enterocytes activates FABP6/IBABP (involved in cytosolic transport), SLC51A/OSTA and SLC51B/OSTB (involved in secretion of conjugated BAs to the portal blood), and repressor NR0B2/SHP thereby indirectly inhibiting SLC10A2/ASBT (involved in BA uptake). In the intestine activates FGF15 expression and secretion leading to hepatic CYP7A1 repression; the function also involves the coordinated induction of hepatic KLB/beta-klotho expression. Transcriptional activation of FABP6/IBAP and SCD1 but not of ABCB11 is isoform-specific. Regulates transcription of liver UGT2B4 and SULT2A1 involved in BA detoxification; binding to the UGT2B4 promoter seems to imply a monomeric transactivation independent of RXRA. Modulates lipid homeostasis by activating liver NR0B2/SHP-mediated repression of SREBF1 isoform SREBP-1C (involved in de novo lipogenesis), expression of PLTP (involved in HDL formation), SCARB1 (involved in HDL hepatic uptake), APOE, APOC1, APOC4, VLDLR and SDC1 (involved in the hepatic uptake of LDL and IDL remnants), and inhibiting expression of MTTP (involved in VLDL assembly). Increases expression of APOC2 (promoting lipoprotein lipase activity implicated in triglyceride clearance). Transrepresses APOA1 probably involving a monomeric competition with NR2A1 for binding to a DR1 element. Also reduces triglyceride clearance by inhibiting expression of ANGPTL3 and APOC3 (both involved in inhibition of lipoprotein lipase). Involved in glucose homeostasis by modulating hepatic gluconeogenesis through activation of NR0B2/SHP-mediated repression of respective genes. Modulates glycogen synthesis (inducing phosphorylation of glycogen synthase kinase-3). Modulates glucose-stimulated insulin secretion and is involved in insulin resistance. Involved in intestinal innate immunity. Plays a role in protecting the distal small intestine against bacterial overgrowth and preservation of the epithelial barrier. Down-regulates inflammatory cytokine expression in several types of immune cells including macrophages and mononuclear cells. Mediates transrepression of TLR4-induced cytokine expression; the function seems to require its sumoylation and prevents N-CoR nuclear receptor corepressor clearance from target genes such as IL1B and NOS2. Involved in the TLR9-mediated protective mechanism in intestinal inflammation. Plays a anti-inflammatory role in liver inflammation; proposed to inhibit pro-inflammatory (but not antiapoptotic) NF-kappa-B signaling. Functionally, activates transcription of IBAP and SDC1. This chain is Bile acid receptor (Nr1h4), found in Mus musculus (Mouse).